A 53-amino-acid chain; its full sequence is Small ribosomal subunit protein uS14 (53 aa).

Positions 17, 20, 36, and 39 each coordinate Zn(2+).

It belongs to the universal ribosomal protein uS14 family. Zinc-binding uS14 subfamily. In terms of assembly, part of the 30S ribosomal subunit. It depends on Zn(2+) as a cofactor.

Its function is as follows. Binds 16S rRNA, required for the assembly of 30S particles. The chain is Small ribosomal subunit protein uS14 from Methanococcus maripaludis (strain DSM 14266 / JCM 13030 / NBRC 101832 / S2 / LL).